Consider the following 433-residue polypeptide: 3-phosphoshikimate 1-carboxyvinyltransferase (433 aa).

K23, S24, and R28 together coordinate 3-phosphoshikimate. Position 23 (K23) interacts with phosphoenolpyruvate. G95 and R123 together coordinate phosphoenolpyruvate. Positions 170, 171, 172, 198, 317, and 344 each coordinate 3-phosphoshikimate. Q172 contributes to the phosphoenolpyruvate binding site. Catalysis depends on D317, which acts as the Proton acceptor. Residues R348, R391, and K416 each coordinate phosphoenolpyruvate.

The protein belongs to the EPSP synthase family. In terms of assembly, monomer.

Its subcellular location is the cytoplasm. The catalysed reaction is 3-phosphoshikimate + phosphoenolpyruvate = 5-O-(1-carboxyvinyl)-3-phosphoshikimate + phosphate. It participates in metabolic intermediate biosynthesis; chorismate biosynthesis; chorismate from D-erythrose 4-phosphate and phosphoenolpyruvate: step 6/7. Catalyzes the transfer of the enolpyruvyl moiety of phosphoenolpyruvate (PEP) to the 5-hydroxyl of shikimate-3-phosphate (S3P) to produce enolpyruvyl shikimate-3-phosphate and inorganic phosphate. The protein is 3-phosphoshikimate 1-carboxyvinyltransferase of Neisseria meningitidis serogroup B (strain ATCC BAA-335 / MC58).